Consider the following 1333-residue polypeptide: Protein grainyhead (1333 aa).

Disordered stretches follow at residues 52 to 93, 439 to 598, 617 to 655, 727 to 784, and 853 to 885; these read SLSP…DSPQ, LLGS…PGAR, QTSH…GPYI, RFAG…GGAT, and TAVH…DFGR. Positions 59–68 are enriched in gly residues; it reads GSGGHSGGGN. Positions 445-488 are enriched in low complexity; that stretch reads SSSATVSTTGVVSTTTISHHQQQQQQQQQQQQQQQQQHQQQQQH. The segment covering 520 to 532 has biased composition (basic and acidic residues); it reads IKREPEDLRKDPK. 2 stretches are compositionally biased toward low complexity: residues 533 to 546 and 567 to 596; these read NGNI…NGPG and PSTP…GSPG. The span at 626–642 shows a compositional bias: gly residues; sequence GAGGGAGPAGAAGGGGV. The span at 749–772 shows a compositional bias: low complexity; sequence QQQQQQQQHQQQQQQQQHHQQQQH. The span at 853–877 shows a compositional bias: polar residues; it reads TAVHGSQNSPTTSLVDTSTNGSTRS. The Grh/CP2 DB domain occupies 899–1125; that stretch reads TNVGFRYHLE…DFAKPPVLFS (227 aa).

The protein belongs to the grh/CP2 family. Grainyhead subfamily. As to expression, restricted, during embryogenesis, to tissues derived from ectoderm, predominantly the central nervous system (CNS) and the epidermis.

Its subcellular location is the nucleus. Functionally, transcription factor that binds a CNS-specific regulatory element of the Dopa decarboxylase (Ddc) gene. Also interacts with sequences adjacent to other transcription units, including Ultrabithorax (Ubx) and engrailed (en). Activity in vivo may be required only at high levels transiently to activate the expression of Ddc in the CNS. The sequence is that of Protein grainyhead (grh) from Drosophila melanogaster (Fruit fly).